The sequence spans 521 residues: uncharacterized protein (521 aa).

Positions 14 to 41 (QFQQMQHQMQQQQQQQMQQQQQQQQQQQ) form a coiled coil. 3 stretches are compositionally biased toward low complexity: residues 238–266 (LSGS…TSSS), 275–353 (SSTS…NNNN), and 423–482 (PRLS…PNNP). Disordered regions lie at residues 238–357 (LSGS…ISGF) and 413–491 (TAVA…SNNG).

This is an uncharacterized protein from Dictyostelium discoideum (Social amoeba).